The chain runs to 304 residues: Coenzyme PQQ synthesis protein B (304 aa).

It belongs to the PqqB family.

The protein operates within cofactor biosynthesis; pyrroloquinoline quinone biosynthesis. In terms of biological role, may be involved in the transport of PQQ or its precursor to the periplasm. The chain is Coenzyme PQQ synthesis protein B from Ectopseudomonas mendocina (strain ymp) (Pseudomonas mendocina).